Here is a 700-residue protein sequence, read N- to C-terminus: Elongation factor G (700 aa).

A tr-type G domain is found at 8 to 290 (ERYRNIGISA…AVVEFMPSPV (283 aa)). Residues 17-24 (AHIDAGKT), 88-92 (DTPGH), and 142-145 (NKMD) each bind GTP.

It belongs to the TRAFAC class translation factor GTPase superfamily. Classic translation factor GTPase family. EF-G/EF-2 subfamily.

The protein localises to the cytoplasm. Functionally, catalyzes the GTP-dependent ribosomal translocation step during translation elongation. During this step, the ribosome changes from the pre-translocational (PRE) to the post-translocational (POST) state as the newly formed A-site-bound peptidyl-tRNA and P-site-bound deacylated tRNA move to the P and E sites, respectively. Catalyzes the coordinated movement of the two tRNA molecules, the mRNA and conformational changes in the ribosome. The chain is Elongation factor G from Albidiferax ferrireducens (strain ATCC BAA-621 / DSM 15236 / T118) (Rhodoferax ferrireducens).